The chain runs to 118 residues: uncharacterized protein (118 aa).

A run of 3 helical transmembrane segments spans residues 17-37, 60-80, and 90-110; these read IIIIFYVITSMVQGNYHFAIL, INYTIIGTIIGQYTVLIIMIF, and YIEQILTTNLSIVGYAFGSFW.

It is found in the membrane. This is an uncharacterized protein from Acanthamoeba polyphaga mimivirus (APMV).